Consider the following 202-residue polypeptide: B-cell CLL/lymphoma 7 protein family member B (202 aa).

The interval 53 to 202 (DSKEKEKSKS…PTVPQTASES (150 aa)) is disordered. Residues 90–99 (ENSNQSSVSD) show a composition bias toward polar residues. Residues 107–123 (SSTNSSPSPQQSESLSP) are compositionally biased toward low complexity. Residues S114, S118, S120, S122, S127, S148, and S152 each carry the phosphoserine modification.

The protein belongs to the BCL7 family. Ubiquitous.

Positive regulator of apoptosis. Plays a role in the Wnt signaling pathway, negatively regulating the expression of Wnt signaling components CTNNB1 and HMGA1. Involved in cell cycle progression, maintenance of the nuclear structure and stem cell differentiation. May play a role in lung tumor development or progression. The sequence is that of B-cell CLL/lymphoma 7 protein family member B (BCL7B) from Homo sapiens (Human).